A 444-amino-acid chain; its full sequence is Divalent metal cation transporter MntH (444 aa).

Transmembrane regions (helical) follow at residues 31–51, 68–88, 115–135, 146–166, 175–195, 212–232, 267–287, 303–323, 356–376, 381–401, and 413–433; these read GGHW…VSVG, FGYL…VLQG, LALW…EVIG, IPLT…LLLM, AFVM…IALA, VVTN…TVMP, VALM…AAVF, ALLA…VALL, LLTR…YGEA, LLVL…IPLV, and LVAP…IVGL.

The protein belongs to the NRAMP family.

The protein localises to the cell inner membrane. H(+)-stimulated, divalent metal cation uptake system. In Xanthomonas campestris pv. campestris (strain ATCC 33913 / DSM 3586 / NCPPB 528 / LMG 568 / P 25), this protein is Divalent metal cation transporter MntH.